Here is a 91-residue protein sequence, read N- to C-terminus: Small ribosomal subunit protein uS19 (91 aa).

It belongs to the universal ribosomal protein uS19 family.

In terms of biological role, protein S19 forms a complex with S13 that binds strongly to the 16S ribosomal RNA. The chain is Small ribosomal subunit protein uS19 from Paraburkholderia phymatum (strain DSM 17167 / CIP 108236 / LMG 21445 / STM815) (Burkholderia phymatum).